A 922-amino-acid polypeptide reads, in one-letter code: MATTDVFIISSSPPRRLVSHIASSPPLPSLDKMVNGKKASNLRQGSSVAPIPTGATIFASASTLLRESSSGSLQGFDNARSFVTSAVQDENDLKKSAKPKAPRKTAPKKEDGTVEKVAKASRKTVKKKDKDVSGDFVDELVGEAAEIIAEKKPRKPRAKKGDNAEGKSGSVAEATVEKKPRKSRAKKAVDATGEDLKEKVPRKSRAKKTDVEAGIETVPKEKAVRKPRAKNSDLDSNLQSKMVKGRVTKSAVNASNTHKVETSKADTGNKHFAPNPIVEDIVADEGFGLVEAIRRRTNWTPPKSTKVPIDLEDSPEAQESDTSKGFAELLGSFGYSSYQADSIEKRISSGVSNGAAATRKRKLIEMVTTNIPREPGSKTTKEKAVKKKARTLTDLATSAYATAEDDDNLLDAPTPLLQYFPHAAPEGSTNNGFKIPPKPRSKSPMKRVQKSKTGSAEEPILLSPESAMKQVSNQDFVFGTSSQLAREDSPSLLRDLHDAMQASNELDDYDDPFVSPPTKIAERGKAVVAAKRNLWSIAARDNHGDLMDVETIDLAHTPVAKPDRIMLSQKPSSLVTPGKDDWFDIDEIEDNRPPSTQVPLRETGPIERSINFQLLDSPTQPKNTSKDSSKVFPQKKGTKSLVDKSTTPKKVDASKMPDYESFTTPQLTREIQKYKFKQIKSRKRMIDLLIQCYESQNRPALGVLQGNIPIITQNSLEKSKDVADSSTQVKPTIPSPRRGRAKKVTTSTASLPKSKAKSKMTDTVAFLEMDSDTPLSKIRTPQKSRKGKQPLEDIFDSDHPITPSPPRRSDSQIRKISKALELSPDNNQDDEAQQAQLFTHIYTAITKAPPSQDPFNPSWHEKILLYDPIILEDLASWLNTGALSKVGWDEEVAPLEVKKWCESKSICCLWKENQGGGARSRY.

Disordered regions lie at residues 86–134 (AVQD…DVSG), 146–273 (EIIA…KHFA), 299–323 (WTPP…SDTS), 367–389 (VTTN…KKKA), 420–458 (FPHA…SAEE), 612–657 (FQLL…SKMP), and 717–813 (EKSK…DSQI). Residues 96–106 (SAKPKAPRKTA) are compositionally biased toward basic residues. Composition is skewed to basic and acidic residues over residues 107 to 118 (PKKEDGTVEKVA), 194 to 211 (EDLK…KTDV), and 258 to 269 (HKVETSKADTGN). Residues 310–319 (DLEDSPEAQE) are compositionally biased toward acidic residues. A compositionally biased stretch (basic residues) spans 437–450 (PKPRSKSPMKRVQK). The segment covering 612–623 (FQLLDSPTQPKN) has biased composition (polar residues).

This sequence belongs to the SLX4 family. As to quaternary structure, forms a heterodimer with slx1. Post-translationally, phosphorylated in response to DNA damage.

Its subcellular location is the nucleus. Functionally, regulatory subunit of the slx1-slx4 structure-specific endonuclease that resolves DNA secondary structures generated during DNA repair and recombination. Has endonuclease activity towards branched DNA substrates, introducing single-strand cuts in duplex DNA close to junctions with ss-DNA. In Sclerotinia sclerotiorum (strain ATCC 18683 / 1980 / Ss-1) (White mold), this protein is Structure-specific endonuclease subunit slx4 (slx4).